The following is a 535-amino-acid chain: Nuclear/nucleolar GTPase 2 (535 aa).

The interval 1-42 (MAKKKERAVNVSGKPRHSLDVNRANDKKGAGGGAGGGGGGRS) is disordered. A compositionally biased stretch (basic and acidic residues) spans 17-29 (HSLDVNRANDKKG). Residues 30–41 (AGGGAGGGGGGR) show a composition bias toward gly residues. Positions 213–374 (WGELYKVIDS…LIDCPGVVYQ (162 aa)) constitute a CP-type G domain. The interval 261 to 264 (NKCD) is G4. The interval 290-292 (SIN) is G5. Residues 323 to 330 (GYPNVGKS) form a G1 region. Residues 349–353 (GETKV) form a G2 region. Positions 367-370 (DCPG) are G3. Positions 464 to 495 (FFVPPPQQGEDSPSETAEPVDKSDEEGVSSDR) are disordered.

Belongs to the TRAFAC class YlqF/YawG GTPase family. RsgA subfamily.

The protein resides in the nucleus. It is found in the nucleolus. Its function is as follows. GTPase involved in pre-60S ribosomal subunit maturation. This chain is Nuclear/nucleolar GTPase 2, found in Oryza sativa subsp. indica (Rice).